Reading from the N-terminus, the 120-residue chain is Glycine cleavage system H protein (120 aa).

The region spanning 17–99 (VATVGITEHA…QGAAWFFKLK (83 aa)) is the Lipoyl-binding domain. K58 carries the post-translational modification N6-lipoyllysine.

This sequence belongs to the GcvH family. The glycine cleavage system is composed of four proteins: P, T, L and H. It depends on (R)-lipoate as a cofactor.

In terms of biological role, the glycine cleavage system catalyzes the degradation of glycine. The H protein shuttles the methylamine group of glycine from the P protein to the T protein. This chain is Glycine cleavage system H protein, found in Sinorhizobium medicae (strain WSM419) (Ensifer medicae).